The primary structure comprises 123 residues: Large ribosomal subunit protein bL12 (123 aa).

It belongs to the bacterial ribosomal protein bL12 family. Homodimer. Part of the ribosomal stalk of the 50S ribosomal subunit. Forms a multimeric L10(L12)X complex, where L10 forms an elongated spine to which 2 to 4 L12 dimers bind in a sequential fashion. Binds GTP-bound translation factors.

Functionally, forms part of the ribosomal stalk which helps the ribosome interact with GTP-bound translation factors. Is thus essential for accurate translation. The polypeptide is Large ribosomal subunit protein bL12 (Parvibaculum lavamentivorans (strain DS-1 / DSM 13023 / NCIMB 13966)).